The following is a 204-amino-acid chain: Holliday junction branch migration complex subunit RuvA (204 aa).

The segment at 1 to 63 is domain I; the sequence is MIGWLQGRVL…EDGQFLYGFS (63 aa). A domain II region spans residues 64–142; it reads SFLQRQLFRE…KNDLFLCDES (79 aa). The segment at 143 to 152 is flexible linker; that stretch reads ESSRAPIALS. The interval 152–204 is domain III; sequence SASEEAIQALIALELAPAEAELWVKKAQKTLAEDADSAALIKTAFALRLQGAK.

The protein belongs to the RuvA family. In terms of assembly, homotetramer. Forms an RuvA(8)-RuvB(12)-Holliday junction (HJ) complex. HJ DNA is sandwiched between 2 RuvA tetramers; dsDNA enters through RuvA and exits via RuvB. An RuvB hexamer assembles on each DNA strand where it exits the tetramer. Each RuvB hexamer is contacted by two RuvA subunits (via domain III) on 2 adjacent RuvB subunits; this complex drives branch migration. In the full resolvosome a probable DNA-RuvA(4)-RuvB(12)-RuvC(2) complex forms which resolves the HJ.

The protein localises to the cytoplasm. Functionally, the RuvA-RuvB-RuvC complex processes Holliday junction (HJ) DNA during genetic recombination and DNA repair, while the RuvA-RuvB complex plays an important role in the rescue of blocked DNA replication forks via replication fork reversal (RFR). RuvA specifically binds to HJ cruciform DNA, conferring on it an open structure. The RuvB hexamer acts as an ATP-dependent pump, pulling dsDNA into and through the RuvAB complex. HJ branch migration allows RuvC to scan DNA until it finds its consensus sequence, where it cleaves and resolves the cruciform DNA. The sequence is that of Holliday junction branch migration complex subunit RuvA from Dichelobacter nodosus (strain VCS1703A).